The following is a 425-amino-acid chain: Aspyridones cluster regulator (425 aa).

The zn(2)-C6 fungal-type DNA-binding region spans 100–127; the sequence is CVDCRASKTRCTGEPEGCKRCTFRKRPC. The disordered stretch occupies residues 132 to 159; the sequence is LRRSNTTQHGEQIEASSSTFTMSDEQGS. Positions 133 to 157 are enriched in polar residues; it reads RRSNTTQHGEQIEASSSTFTMSDEQ.

It is found in the nucleus. In terms of biological role, transcription factor involved in regulation of gene cluster that mediates the biosynthesis of aphidicolin. This chain is Aspyridones cluster regulator (TF), found in Neocamarosporium betae (Beet black rot fungus).